The following is a 283-amino-acid chain: Thymidylate synthase (283 aa).

A dUMP-binding site is contributed by Arg-22. Cys-160 serves as the catalytic Nucleophile. DUMP contacts are provided by residues 180 to 183 (RSCD), Asn-191, and 221 to 223 (HIY). Asp-183 serves as a coordination point for (6R)-5,10-methylene-5,6,7,8-tetrahydrofolate. Ser-282 is a binding site for (6R)-5,10-methylene-5,6,7,8-tetrahydrofolate.

It belongs to the thymidylate synthase family. Bacterial-type ThyA subfamily. Homodimer.

Its subcellular location is the cytoplasm. The enzyme catalyses dUMP + (6R)-5,10-methylene-5,6,7,8-tetrahydrofolate = 7,8-dihydrofolate + dTMP. It functions in the pathway pyrimidine metabolism; dTTP biosynthesis. In terms of biological role, catalyzes the reductive methylation of 2'-deoxyuridine-5'-monophosphate (dUMP) to 2'-deoxythymidine-5'-monophosphate (dTMP) while utilizing 5,10-methylenetetrahydrofolate (mTHF) as the methyl donor and reductant in the reaction, yielding dihydrofolate (DHF) as a by-product. This enzymatic reaction provides an intracellular de novo source of dTMP, an essential precursor for DNA biosynthesis. This is Thymidylate synthase from Shewanella loihica (strain ATCC BAA-1088 / PV-4).